The primary structure comprises 117 residues: Large ribosomal subunit protein bL20 (117 aa).

It belongs to the bacterial ribosomal protein bL20 family.

Binds directly to 23S ribosomal RNA and is necessary for the in vitro assembly process of the 50S ribosomal subunit. It is not involved in the protein synthesizing functions of that subunit. In Natranaerobius thermophilus (strain ATCC BAA-1301 / DSM 18059 / JW/NM-WN-LF), this protein is Large ribosomal subunit protein bL20.